Here is a 335-residue protein sequence, read N- to C-terminus: Biotin synthase (335 aa).

A disordered region spans residues 1–20; that stretch reads MVSVGTQSHSGRDQAEQNPS. The region spanning 59-284 is the Radical SAM core domain; the sequence is GHLQKSSLLS…MMPQSMVRLS (226 aa). The [4Fe-4S] cluster site is built by Cys74, Cys78, and Cys81. 4 residues coordinate [2Fe-2S] cluster: Cys118, Cys150, Cys210, and Arg282.

It belongs to the radical SAM superfamily. Biotin synthase family. Homodimer. [4Fe-4S] cluster is required as a cofactor. Requires [2Fe-2S] cluster as cofactor.

The enzyme catalyses (4R,5S)-dethiobiotin + (sulfur carrier)-SH + 2 reduced [2Fe-2S]-[ferredoxin] + 2 S-adenosyl-L-methionine = (sulfur carrier)-H + biotin + 2 5'-deoxyadenosine + 2 L-methionine + 2 oxidized [2Fe-2S]-[ferredoxin]. It functions in the pathway cofactor biosynthesis; biotin biosynthesis; biotin from 7,8-diaminononanoate: step 2/2. Its function is as follows. Catalyzes the conversion of dethiobiotin (DTB) to biotin by the insertion of a sulfur atom into dethiobiotin via a radical-based mechanism. This Zymomonas mobilis subsp. mobilis (strain ATCC 31821 / ZM4 / CP4) protein is Biotin synthase.